The primary structure comprises 793 residues: Xaa-Pro dipeptidyl-peptidase (793 aa).

Active-site charge relay system residues include S363, D483, and H514.

This sequence belongs to the peptidase S15 family. As to quaternary structure, homodimer.

It localises to the cytoplasm. The catalysed reaction is Hydrolyzes Xaa-Pro-|- bonds to release unblocked, N-terminal dipeptides from substrates including Ala-Pro-|-p-nitroanilide and (sequentially) Tyr-Pro-|-Phe-Pro-|-Gly-Pro-|-Ile.. Its function is as follows. Removes N-terminal dipeptides sequentially from polypeptides having unsubstituted N-termini provided that the penultimate residue is proline. The protein is Xaa-Pro dipeptidyl-peptidase of Lactobacillus helveticus (strain DPC 4571).